Here is a 151-residue protein sequence, read N- to C-terminus: Putative pre-16S rRNA nuclease (151 aa).

This sequence belongs to the YqgF nuclease family.

It localises to the cytoplasm. Could be a nuclease involved in processing of the 5'-end of pre-16S rRNA. The protein is Putative pre-16S rRNA nuclease of Thermosynechococcus vestitus (strain NIES-2133 / IAM M-273 / BP-1).